The chain runs to 147 residues: Deoxyuridine 5'-triphosphate nucleotidohydrolase (147 aa).

The dUMP site is built by Ser69, Gly82, Asp85, Tyr88, Lys93, Arg137, Phe142, and Gly143.

Belongs to the dUTPase family. Homotrimer. Mg(2+) serves as cofactor.

It catalyses the reaction dUTP + H2O = dUMP + diphosphate + H(+). It functions in the pathway pyrimidine metabolism; dUMP biosynthesis; dUMP from dCTP (dUTP route): step 2/2. Functionally, involved in nucleotide metabolism via production of dUMP, the immediate precursor of thymidine nucleotides, and decreases the intracellular concentration of dUTP so that uracil cannot be incorporated into DNA. Shows a significant activity against dITP, another potentially mutagenic nucleotide. The chain is Deoxyuridine 5'-triphosphate nucleotidohydrolase from Saccharomyces cerevisiae (strain ATCC 204508 / S288c) (Baker's yeast).